The chain runs to 405 residues: MMQQPPPGGILPHHAPPPSAQQQYGYQQPYGIAGAAPPPPQMWNPQAAAPPSVQPTTADEIRTLWIGDLQYWMDENFLYGCFAHTGEMVSAKVIRNKQTGQVEGYGFIEFASHAAAERVLQTFNNAPIPSFPDQLFRLNWASLSSGDKRDDSPDYTIFVGDLAADVTDYILLETFRASYPSVKGAKVVIDRVTGRTKGYGFVRFSDESEQIRAMTEMNGVPCSTRPMRIGPAASKKGVTGQRDSYQSSAAGVTTDNDPNNTTVFVGGLDASVTDDHLKNVFSQYGEIVHVKIPAGKRCGFVQFSEKSCAEEALRMLNGVQLGGTTVRLSWGRSPSNKQSGDPSQFYYGGYGQGQEQYGYTMPQDPNAYYGGYSGGGYSGGYQQTPQAGQQPPQQPPQQQQVGFSY.

Residues Met1 to Ser19 show a composition bias toward pro residues. Positions Met1–Gln54 are disordered. A compositionally biased stretch (low complexity) spans Ala20–Ala35. 3 RRM domains span residues Arg62–Leu143, Tyr155–Ser234, and Thr261–Ser333. The disordered stretch occupies residues Gly379–Tyr405. Low complexity predominate over residues Gly380–Tyr405.

It belongs to the polyadenylate-binding RBP45 family. Both isoform 1 and isoform 2 interact with poly(A)+ RNA in nucleus. In terms of tissue distribution, expressed in roots, leaves, stems, flowers, siliques, and seedlings. Present in immature anther tissues (tapetum cells) and mature pollen grains.

It is found in the nucleus. Its function is as follows. Heterogeneous nuclear ribonucleoprotein (hnRNP)-protein binding the poly(A) tail of mRNA and probably involved in some steps of pre-mRNA maturation. The sequence is that of Polyadenylate-binding protein RBP45B (RBP45B) from Arabidopsis thaliana (Mouse-ear cress).